A 466-amino-acid polypeptide reads, in one-letter code: NADH-quinone oxidoreductase subunit N (466 aa).

14 helical membrane-spanning segments follow: residues 9–29 (LIPLLILACGSVFVLMLGAIV), 33–53 (CGTVIGVAVCAGTALWAMLAP), 68–88 (PFTRFFLVFFAVTAGLSLLLA), 100–120 (EEYPATILFGTFGMGVVASAA), 122–142 (FLTLFLGLEALTFAFYILVAY), 157–177 (LLMGAVSAAFVAFGIALLYGA), 190–210 (SAAGGGIALAGWGLLLAGLAF), 232–252 (VVAFLASGSKGAAIALFLLIL), 263–283 (APLWGLAFLSMTVGNLAALLQ), 289–309 (MLAYSSVAQMGYVALALLSGG), 314–334 (AAAFYAVAYGAMVLAAFGALA), 359–379 (GVVLAVAMLALAGIPPTVGFV), 394–416 (APLAVIGILTAAASAYYYLRVVV), and 438–458 (LSLGIAALAIFILGIWPGPLF).

This sequence belongs to the complex I subunit 2 family. NDH-1 is composed of 14 different subunits. Subunits NuoA, H, J, K, L, M, N constitute the membrane sector of the complex.

The protein localises to the cell inner membrane. The catalysed reaction is a quinone + NADH + 5 H(+)(in) = a quinol + NAD(+) + 4 H(+)(out). NDH-1 shuttles electrons from NADH, via FMN and iron-sulfur (Fe-S) centers, to quinones in the respiratory chain. The immediate electron acceptor for the enzyme in this species is believed to be ubiquinone. Couples the redox reaction to proton translocation (for every two electrons transferred, four hydrogen ions are translocated across the cytoplasmic membrane), and thus conserves the redox energy in a proton gradient. The chain is NADH-quinone oxidoreductase subunit N from Geobacter metallireducens (strain ATCC 53774 / DSM 7210 / GS-15).